The following is a 444-amino-acid chain: uncharacterized protein (444 aa).

A Radical SAM core domain is found at 164–381 (GAYGKSFLLE…EKALKKEGIR (218 aa)). Cys178, Cys182, and Cys185 together coordinate [4Fe-4S] cluster.

Requires [4Fe-4S] cluster as cofactor.

This is an uncharacterized protein from Methanocaldococcus jannaschii (strain ATCC 43067 / DSM 2661 / JAL-1 / JCM 10045 / NBRC 100440) (Methanococcus jannaschii).